The following is a 164-amino-acid chain: Phosphopantetheine adenylyltransferase (164 aa).

Substrate is bound at residue serine 9. Residues 9-10 and histidine 17 contribute to the ATP site; that span reads SF. Residues lysine 41, valine 78, and arginine 92 each contribute to the substrate site. ATP contacts are provided by residues 93–95, glutamate 103, and 128–134; these read GLR and SRPITAT.

It belongs to the bacterial CoaD family. As to quaternary structure, homohexamer. Requires Mg(2+) as cofactor.

The protein resides in the cytoplasm. It catalyses the reaction (R)-4'-phosphopantetheine + ATP + H(+) = 3'-dephospho-CoA + diphosphate. It functions in the pathway cofactor biosynthesis; coenzyme A biosynthesis; CoA from (R)-pantothenate: step 4/5. In terms of biological role, reversibly transfers an adenylyl group from ATP to 4'-phosphopantetheine, yielding dephospho-CoA (dPCoA) and pyrophosphate. This chain is Phosphopantetheine adenylyltransferase, found in Agrobacterium fabrum (strain C58 / ATCC 33970) (Agrobacterium tumefaciens (strain C58)).